Reading from the N-terminus, the 379-residue chain is Chaperone protein DnaJ 2 (379 aa).

The region spanning 4-68 (DYYAVLGVRR…QKKQVYDLGG (65 aa)) is the J domain. The segment at 130–212 (GTTKDIQVDT…CAGDGRVPSR (83 aa)) adopts a CR-type zinc-finger fold. The Zn(2+) site is built by Cys-143, Cys-146, Cys-160, Cys-163, Cys-186, Cys-189, Cys-200, and Cys-203. CXXCXGXG motif repeat units follow at residues 143 to 150 (CNTCNGEG), 160 to 167 (CDMCRGRG), 186 to 193 (CPQCQGFA), and 200 to 207 (CPECAGDG). The disordered stretch occupies residues 351–379 (RGEERPTGQFQPGQQGLFSRLKDAFNGRS). Over residues 358–367 (GQFQPGQQGL) the composition is skewed to polar residues. Positions 370–379 (RLKDAFNGRS) are enriched in basic and acidic residues.

The protein belongs to the DnaJ family. In terms of assembly, homodimer. Requires Zn(2+) as cofactor.

It localises to the cytoplasm. In terms of biological role, participates actively in the response to hyperosmotic and heat shock by preventing the aggregation of stress-denatured proteins and by disaggregating proteins, also in an autonomous, DnaK-independent fashion. Unfolded proteins bind initially to DnaJ; upon interaction with the DnaJ-bound protein, DnaK hydrolyzes its bound ATP, resulting in the formation of a stable complex. GrpE releases ADP from DnaK; ATP binding to DnaK triggers the release of the substrate protein, thus completing the reaction cycle. Several rounds of ATP-dependent interactions between DnaJ, DnaK and GrpE are required for fully efficient folding. Also involved, together with DnaK and GrpE, in the DNA replication of plasmids through activation of initiation proteins. The polypeptide is Chaperone protein DnaJ 2 (Streptomyces albus G).